Here is a 60-residue protein sequence, read N- to C-terminus: Large ribosomal subunit protein bL33 (60 aa).

The protein belongs to the bacterial ribosomal protein bL33 family.

The chain is Large ribosomal subunit protein bL33 from Chlorobium phaeobacteroides (strain DSM 266 / SMG 266 / 2430).